A 206-amino-acid chain; its full sequence is Fibroblast growth factor 4 (206 aa).

The N-terminal stretch at Met-1–Ala-30 is a signal peptide.

This sequence belongs to the heparin-binding growth factors family. As to quaternary structure, interacts with FGFR1, FGFR2, FGFR3 and FGFR4. Affinity between fibroblast growth factors (FGFs) and their receptors is increased by heparan sulfate glycosaminoglycans that function as coreceptors.

The protein localises to the secreted. Plays an important role in the regulation of embryonic development, cell proliferation, and cell differentiation. Required for normal limb and cardiac valve development during embryogenesis. May play a role in embryonic molar tooth bud development via inducing the expression of MSX1, MSX2 and MSX1-mediated expression of SDC1 in dental mesenchyme cells. This Homo sapiens (Human) protein is Fibroblast growth factor 4.